The primary structure comprises 332 residues: RNA polymerase sigma-B factor (332 aa).

A Polymerase core binding motif is present at residues 125 to 138; the sequence is DLIQEGALGLERGV. The H-T-H motif DNA-binding region spans 294–313; sequence LVQISQRMGISRERVRQVEK.

This sequence belongs to the sigma-70 factor family.

In terms of biological role, sigma factors are initiation factors that promote the attachment of RNA polymerase to specific initiation sites and are then released. This chain is RNA polymerase sigma-B factor (sigB), found in Nostoc sp. (strain PCC 7120 / SAG 25.82 / UTEX 2576).